Consider the following 255-residue polypeptide: uncharacterized protein (255 aa).

Helical transmembrane passes span 99–119 (ISLI…ITSF) and 146–166 (YIGS…ILFL).

It is found in the mitochondrion membrane. This is an uncharacterized protein from Schizosaccharomyces pombe (strain 972 / ATCC 24843) (Fission yeast).